The sequence spans 483 residues: Allantoate deiminase 1 (483 aa).

Residues Met-1–Met-30 form the signal peptide. 5 residues coordinate Mn(2+): His-125, Asp-136, Glu-173, His-239, and His-457.

This sequence belongs to the peptidase M20A family. As to quaternary structure, homodimer. The cofactor is Mn(2+). In terms of tissue distribution, expressed in roots, stems and leaves. Not detected in nodules.

The protein resides in the endoplasmic reticulum. The catalysed reaction is allantoate + H2O + 2 H(+) = (S)-2-ureidoglycine + NH4(+) + CO2. Its activity is regulated as follows. Inhibited by borate, fluoride, L-Asn and L-Asp. Functionally, involved in the catabolism of purine nucleotides. Can use allantoate as substrate. The sequential activity of AAH, UGLYAH and UAH allows a complete purine breakdown without the intermediate generation of urea. This chain is Allantoate deiminase 1, found in Glycine max (Soybean).